The following is a 171-amino-acid chain: Peptide deformylase (171 aa).

Cys-91 and His-133 together coordinate Fe cation. Residue Glu-134 is part of the active site. His-137 is a binding site for Fe cation.

The protein belongs to the polypeptide deformylase family. Fe(2+) serves as cofactor.

The enzyme catalyses N-terminal N-formyl-L-methionyl-[peptide] + H2O = N-terminal L-methionyl-[peptide] + formate. Its function is as follows. Removes the formyl group from the N-terminal Met of newly synthesized proteins. Requires at least a dipeptide for an efficient rate of reaction. N-terminal L-methionine is a prerequisite for activity but the enzyme has broad specificity at other positions. This chain is Peptide deformylase, found in Hamiltonella defensa subsp. Acyrthosiphon pisum (strain 5AT).